A 102-amino-acid polypeptide reads, in one-letter code: CRISPR-associated endoribonuclease Cas2 1 (102 aa).

Mg(2+) is bound at residue aspartate 17.

This sequence belongs to the CRISPR-associated endoribonuclease Cas2 protein family. In terms of assembly, homodimer, forms a heterotetramer with a Cas1 homodimer. It depends on Mg(2+) as a cofactor.

Functionally, CRISPR (clustered regularly interspaced short palindromic repeat), is an adaptive immune system that provides protection against mobile genetic elements (viruses, transposable elements and conjugative plasmids). CRISPR clusters contain sequences complementary to antecedent mobile elements and target invading nucleic acids. CRISPR clusters are transcribed and processed into CRISPR RNA (crRNA). Functions as a ssRNA-specific endoribonuclease. Involved in the integration of spacer DNA into the CRISPR cassette. The polypeptide is CRISPR-associated endoribonuclease Cas2 1 (Rhodospirillum rubrum (strain ATCC 11170 / ATH 1.1.1 / DSM 467 / LMG 4362 / NCIMB 8255 / S1)).